Reading from the N-terminus, the 354-residue chain is tRNA N6-adenosine threonylcarbamoyltransferase (354 aa).

2 residues coordinate Fe cation: histidine 115 and histidine 119. Substrate is bound by residues 138–142, aspartate 171, glycine 184, and asparagine 276; that span reads LVSGG. Residue aspartate 304 coordinates Fe cation.

The protein belongs to the KAE1 / TsaD family. Fe(2+) is required as a cofactor.

The protein localises to the cytoplasm. The catalysed reaction is L-threonylcarbamoyladenylate + adenosine(37) in tRNA = N(6)-L-threonylcarbamoyladenosine(37) in tRNA + AMP + H(+). Its function is as follows. Required for the formation of a threonylcarbamoyl group on adenosine at position 37 (t(6)A37) in tRNAs that read codons beginning with adenine. Is involved in the transfer of the threonylcarbamoyl moiety of threonylcarbamoyl-AMP (TC-AMP) to the N6 group of A37, together with TsaE and TsaB. TsaD likely plays a direct catalytic role in this reaction. This chain is tRNA N6-adenosine threonylcarbamoyltransferase, found in Xanthomonas campestris pv. campestris (strain 8004).